We begin with the raw amino-acid sequence, 328 residues long: 7,8-didemethyl-8-hydroxy-5-deazariboflavin synthase (328 aa).

Positions 1-242 constitute a Radical SAM core domain; it reads MTYSRNIFIP…PDVSIQVPPN (242 aa). Residues C15, C19, and C22 each contribute to the [4Fe-4S] cluster site.

Belongs to the radical SAM superfamily. CofG family. As to quaternary structure, consists of two subunits, CofG and CofH. [4Fe-4S] cluster is required as a cofactor.

The catalysed reaction is 5-amino-5-(4-hydroxybenzyl)-6-(D-ribitylimino)-5,6-dihydrouracil + S-adenosyl-L-methionine = 7,8-didemethyl-8-hydroxy-5-deazariboflavin + 5'-deoxyadenosine + L-methionine + NH4(+) + H(+). Its pathway is cofactor biosynthesis; coenzyme F0 biosynthesis. In terms of biological role, catalyzes the radical-mediated synthesis of 7,8-didemethyl-8-hydroxy-5-deazariboflavin from 5-amino-5-(4-hydroxybenzyl)-6-(D-ribitylimino)-5,6-dihydrouracil. In Methanothermobacter thermautotrophicus (strain ATCC 29096 / DSM 1053 / JCM 10044 / NBRC 100330 / Delta H) (Methanobacterium thermoautotrophicum), this protein is 7,8-didemethyl-8-hydroxy-5-deazariboflavin synthase.